The primary structure comprises 244 residues: Protein HRI1 (244 aa).

S143 is subject to Phosphoserine.

It belongs to the HRI1 family. In terms of assembly, interacts with HRR25. May interact with SEC72.

The protein resides in the cytoplasm. Its subcellular location is the nucleus. Unknown. Non essential. This is Protein HRI1 (HRI1) from Saccharomyces cerevisiae (strain ATCC 204508 / S288c) (Baker's yeast).